The chain runs to 231 residues: Sugar fermentation stimulation protein homolog (231 aa).

It belongs to the SfsA family.

The sequence is that of Sugar fermentation stimulation protein homolog from Citrifermentans bemidjiense (strain ATCC BAA-1014 / DSM 16622 / JCM 12645 / Bem) (Geobacter bemidjiensis).